Reading from the N-terminus, the 309-residue chain is Sulfate adenylyltransferase subunit 2 (309 aa).

Belongs to the PAPS reductase family. CysD subfamily. Heterodimer composed of CysD, the smaller subunit, and CysN.

It catalyses the reaction sulfate + ATP + H(+) = adenosine 5'-phosphosulfate + diphosphate. It participates in sulfur metabolism; hydrogen sulfide biosynthesis; sulfite from sulfate: step 1/3. In terms of biological role, with CysN forms the ATP sulfurylase (ATPS) that catalyzes the adenylation of sulfate producing adenosine 5'-phosphosulfate (APS) and diphosphate, the first enzymatic step in sulfur assimilation pathway. APS synthesis involves the formation of a high-energy phosphoric-sulfuric acid anhydride bond driven by GTP hydrolysis by CysN coupled to ATP hydrolysis by CysD. This Mycobacterium sp. (strain JLS) protein is Sulfate adenylyltransferase subunit 2.